A 384-amino-acid polypeptide reads, in one-letter code: Glucans biosynthesis protein C (384 aa).

The next 10 membrane-spanning stretches (helical) occupy residues 17 to 37, 54 to 74, 91 to 111, 140 to 160, 173 to 193, 212 to 232, 240 to 260, 274 to 294, 311 to 331, and 338 to 358; these read AWLM…THSW, FIHA…SYML, VGIP…ILLQ, LWFL…FTWF, AISL…YAAI, FIVM…LAFI, FTTP…AYLL, TESV…FSLG, ASLF…AYIT, and LIGF…LYEI.

Belongs to the acyltransferase 3 family. OpgC subfamily.

It localises to the cell membrane. Its pathway is glycan metabolism; osmoregulated periplasmic glucan (OPG) biosynthesis. Functionally, necessary for the succinyl substitution of periplasmic glucans. Could catalyze the transfer of succinyl residues from the cytoplasmic side of the membrane to the nascent glucan backbones on the periplasmic side of the membrane. In Salmonella agona (strain SL483), this protein is Glucans biosynthesis protein C.